Reading from the N-terminus, the 153-residue chain is 4'-phosphopantetheinyl transferase B, mitochondrial (153 aa).

This sequence belongs to the P-Pant transferase superfamily.

Its subcellular location is the mitochondrion. The catalysed reaction is apo-[ACP] + CoA = holo-[ACP] + adenosine 3',5'-bisphosphate + H(+). Acyl-carrier-protein synthase transfers the 4'-phosphopantetheine moiety from coenzyme A to a Ser of an acyl-carrier-protein. The 4'-phosphopantetheine (4'-PPT) portion of CoA provides the essential prosthetic group for a number of carrier proteins and multi-domain enzymes, priming them for the acceptance of acyl building blocks in fatty acid synthesis and many aspects of secondary metabolism mediated by polyketide synthases (PKSs) and non-ribosomal peptide synthetases (NRPSs). PptB is specific for the mitochondrial acyl carrier protein acpA. The sequence is that of 4'-phosphopantetheinyl transferase B, mitochondrial from Aspergillus fumigatus (strain ATCC MYA-4609 / CBS 101355 / FGSC A1100 / Af293) (Neosartorya fumigata).